Consider the following 117-residue polypeptide: Gamma-aminobutyric acid receptor-associated protein-like 1 (117 aa).

G116 is lipidated: Phosphatidylethanolamine amidated glycine; alternate. G116 carries Phosphatidylserine amidated glycine; alternate lipidation. Position 117 (K117) is a propeptide, removed in mature form.

This sequence belongs to the ATG8 family. As to quaternary structure, interacts with ATG13, OPRK1, RB1CC1 and ULK1. Interacts with TP53INP1 and TP53INP2. Directly interacts with SQSTM1. Interacts with ATG3, ATG7 and MAP15. Interacts with TECPR2. Interacts with TBC1D5. Interacts with MAPK15. Interacts with TRIM5. Interacts with MEFV and TRIM21. Interacts with WDFY3. Interacts with the reticulophagy receptor TEX264. Interacts with UBA5. Interacts with KBTBD6 and KBTBD7; the interaction is direct. Interacts with reticulophagy regulators RETREG1, RETREG2 and RETREG3. Interacts with IRGM. Interacts with DNM2. Interacts with NCOA4 (via C-terminus). Post-translationally, the precursor molecule is cleaved by ATG4 (ATG4A, ATG4B, ATG4C or ATG4D) to expose the glycine at the C-terminus and form the cytosolic form, GABARAPL1-I. The processed form is then activated by APG7L/ATG7, transferred to ATG3 and conjugated to phosphatidylethanolamine (PE) phospholipid to form the membrane-bound form, GABARAPL1-II. During non-canonical autophagy, the processed form is conjugated to phosphatidylserine (PS) phospholipid. ATG4 proteins also mediate the delipidation of PE-conjugated forms required for GABARAPL1 recycling when autophagosomes fuse with lysosomes. In addition, ATG4B and ATG4D mediate delipidation of ATG8 proteins conjugated to PS during non-canonical autophagy. ATG4B constitutes the major protein for proteolytic activation. ATG4D is the main enzyme for delipidation activity.

The protein resides in the cytoplasmic vesicle. Its subcellular location is the autophagosome. It localises to the cytoplasmic vesicle membrane. It is found in the cytoplasm. The protein localises to the cytoskeleton. The protein resides in the endoplasmic reticulum. Its subcellular location is the golgi apparatus. Its function is as follows. Ubiquitin-like modifier that increases cell-surface expression of kappa-type opioid receptor through facilitating anterograde intracellular trafficking of the receptor. Involved in formation of autophagosomal vacuoles. While LC3s are involved in elongation of the phagophore membrane, the GABARAP/GATE-16 subfamily is essential for a later stage in autophagosome maturation. Through its interaction with the reticulophagy receptor TEX264, participates in the remodeling of subdomains of the endoplasmic reticulum into autophagosomes upon nutrient stress, which then fuse with lysosomes for endoplasmic reticulum turnover. The polypeptide is Gamma-aminobutyric acid receptor-associated protein-like 1 (Bos taurus (Bovine)).